Here is a 147-residue protein sequence, read N- to C-terminus: Cyanate hydratase (147 aa).

Active-site residues include Arg88, Glu91, and Ser114.

It belongs to the cyanase family.

The catalysed reaction is cyanate + hydrogencarbonate + 3 H(+) = NH4(+) + 2 CO2. Functionally, catalyzes the reaction of cyanate with bicarbonate to produce ammonia and carbon dioxide. This is Cyanate hydratase from Thiobacillus denitrificans (strain ATCC 25259 / T1).